The primary structure comprises 465 residues: Probable Xaa-Pro aminopeptidase pepP (465 aa).

Mn(2+) contacts are provided by Asp-263, Asp-274, Glu-397, and Glu-437.

It belongs to the peptidase M24B family. Mn(2+) is required as a cofactor.

It catalyses the reaction Release of any N-terminal amino acid, including proline, that is linked to proline, even from a dipeptide or tripeptide.. Catalyzes the removal of a penultimate prolyl residue from the N-termini of peptides. The protein is Probable Xaa-Pro aminopeptidase pepP (pepP) of Penicillium rubens (strain ATCC 28089 / DSM 1075 / NRRL 1951 / Wisconsin 54-1255) (Penicillium chrysogenum).